The following is a 258-amino-acid chain: 1-(5-phosphoribosyl)-5-[(5-phosphoribosylamino)methylideneamino] imidazole-4-carboxamide isomerase (258 aa).

The active-site Proton acceptor is aspartate 17. Aspartate 136 acts as the Proton donor in catalysis.

The protein belongs to the HisA/HisF family.

The protein localises to the cytoplasm. It carries out the reaction 1-(5-phospho-beta-D-ribosyl)-5-[(5-phospho-beta-D-ribosylamino)methylideneamino]imidazole-4-carboxamide = 5-[(5-phospho-1-deoxy-D-ribulos-1-ylimino)methylamino]-1-(5-phospho-beta-D-ribosyl)imidazole-4-carboxamide. It functions in the pathway amino-acid biosynthesis; L-histidine biosynthesis; L-histidine from 5-phospho-alpha-D-ribose 1-diphosphate: step 4/9. This is 1-(5-phosphoribosyl)-5-[(5-phosphoribosylamino)methylideneamino] imidazole-4-carboxamide isomerase from Corynebacterium jeikeium (strain K411).